Consider the following 56-residue polypeptide: Ovomucoid (56 aa).

One can recognise a Kazal-like domain in the interval 6–56 (VDCSEYPKPECTAEERPICGSDNKTYGNKCNFCNAVVESNGTLTLRNFGKC). Intrachain disulfides connect cysteine 8/cysteine 38, cysteine 16/cysteine 35, and cysteine 24/cysteine 56. Asparagine 45 carries N-linked (GlcNAc...) asparagine glycosylation.

The protein localises to the secreted. The protein is Ovomucoid of Bambusicola thoracicus (Chinese bamboo-partridge).